Here is a 277-residue protein sequence, read N- to C-terminus: Insertion element IS407 uncharacterized 31.7 kDa protein (277 aa).

One can recognise an Integrase catalytic domain in the interval 103–264 (LPGAPNEVWS…APSEFAAKHR (162 aa)).

In Burkholderia multivorans (strain ATCC 17616 / 249), this protein is Insertion element IS407 uncharacterized 31.7 kDa protein.